Reading from the N-terminus, the 581-residue chain is Arginine--tRNA ligase (581 aa).

The 'HIGH' region motif lies at 126 to 136 (PNLAKEMHVGH).

Belongs to the class-I aminoacyl-tRNA synthetase family. Monomer.

Its subcellular location is the cytoplasm. The enzyme catalyses tRNA(Arg) + L-arginine + ATP = L-arginyl-tRNA(Arg) + AMP + diphosphate. This Shewanella denitrificans (strain OS217 / ATCC BAA-1090 / DSM 15013) protein is Arginine--tRNA ligase.